We begin with the raw amino-acid sequence, 154 residues long: MGSVLVDLQIATENIEGLPTEEQIVQWATGAVQPEGNEVEMTVRIVDEAESHELNLTYRGKDRPTNVLSFPFECPDEVELPLLGDLVICRQVVEREASEQEKPLMAHWAHMVVHGSLHLLGYDHIEDDEAEEMESLETQIMQGLGFDDPYLAEK.

His-114, His-118, and His-124 together coordinate Zn(2+).

It belongs to the endoribonuclease YbeY family. It depends on Zn(2+) as a cofactor.

Its subcellular location is the cytoplasm. Single strand-specific metallo-endoribonuclease involved in late-stage 70S ribosome quality control and in maturation of the 3' terminus of the 16S rRNA. In Haemophilus influenzae (strain ATCC 51907 / DSM 11121 / KW20 / Rd), this protein is Endoribonuclease YbeY.